The sequence spans 554 residues: Dihydroxy-acid dehydratase (554 aa).

Asp-78 contributes to the Mg(2+) binding site. Cys-119 serves as a coordination point for [2Fe-2S] cluster. Asp-120 and Lys-121 together coordinate Mg(2+). An N6-carboxylysine modification is found at Lys-121. Cys-191 contacts [2Fe-2S] cluster. Glu-442 contacts Mg(2+). Ser-468 serves as the catalytic Proton acceptor.

This sequence belongs to the IlvD/Edd family. In terms of assembly, homodimer. It depends on [2Fe-2S] cluster as a cofactor. Mg(2+) is required as a cofactor.

It catalyses the reaction (2R)-2,3-dihydroxy-3-methylbutanoate = 3-methyl-2-oxobutanoate + H2O. The catalysed reaction is (2R,3R)-2,3-dihydroxy-3-methylpentanoate = (S)-3-methyl-2-oxopentanoate + H2O. It functions in the pathway amino-acid biosynthesis; L-isoleucine biosynthesis; L-isoleucine from 2-oxobutanoate: step 3/4. The protein operates within amino-acid biosynthesis; L-valine biosynthesis; L-valine from pyruvate: step 3/4. Functions in the biosynthesis of branched-chain amino acids. Catalyzes the dehydration of (2R,3R)-2,3-dihydroxy-3-methylpentanoate (2,3-dihydroxy-3-methylvalerate) into 2-oxo-3-methylpentanoate (2-oxo-3-methylvalerate) and of (2R)-2,3-dihydroxy-3-methylbutanoate (2,3-dihydroxyisovalerate) into 2-oxo-3-methylbutanoate (2-oxoisovalerate), the penultimate precursor to L-isoleucine and L-valine, respectively. This Acetivibrio thermocellus (strain ATCC 27405 / DSM 1237 / JCM 9322 / NBRC 103400 / NCIMB 10682 / NRRL B-4536 / VPI 7372) (Clostridium thermocellum) protein is Dihydroxy-acid dehydratase.